Here is a 205-residue protein sequence, read N- to C-terminus: Thymidine kinase (205 aa).

Residues 9 to 16 (SAMNAGKS) and 87 to 90 (DESQ) each bind ATP. Catalysis depends on Glu88, which acts as the Proton acceptor. Cys145, Cys147, Cys182, and His185 together coordinate Zn(2+).

The protein belongs to the thymidine kinase family. In terms of assembly, homotetramer.

Its subcellular location is the cytoplasm. It carries out the reaction thymidine + ATP = dTMP + ADP + H(+). The chain is Thymidine kinase from Salmonella paratyphi A (strain ATCC 9150 / SARB42).